Consider the following 187-residue polypeptide: Small ribosomal subunit protein uS10m (187 aa).

This sequence belongs to the universal ribosomal protein uS10 family. In terms of assembly, component of the mitochondrial ribosome small subunit (28S) which comprises a 12S rRNA and about 30 distinct proteins.

It localises to the mitochondrion. The protein is Small ribosomal subunit protein uS10m (mrps10) of Danio rerio (Zebrafish).